Reading from the N-terminus, the 214-residue chain is Guanylate kinase (214 aa).

The Guanylate kinase-like domain occupies 6 to 192 (GTLYIISAPS…ALEDLKAIFR (187 aa)). 13–20 (APSGAGKT) provides a ligand contact to ATP.

The protein belongs to the guanylate kinase family.

It is found in the cytoplasm. It carries out the reaction GMP + ATP = GDP + ADP. Essential for recycling GMP and indirectly, cGMP. This chain is Guanylate kinase, found in Pseudomonas savastanoi pv. phaseolicola (strain 1448A / Race 6) (Pseudomonas syringae pv. phaseolicola (strain 1448A / Race 6)).